Here is a 68-residue protein sequence, read N- to C-terminus: MQVSVRDNNVEQALRALKKKLQREGVFREMKLKQHFEKPSVKKAREKAEAVRRARKLARKKAQREGAL.

The protein belongs to the bacterial ribosomal protein bS21 family.

In Paracoccus denitrificans (strain Pd 1222), this protein is Small ribosomal subunit protein bS21.